The sequence spans 657 residues: Threonine--tRNA ligase (657 aa).

The 64-residue stretch at 7 to 70 (SQTQVTVTLP…SEDASIEIVT (64 aa)) folds into the TGS domain. A catalytic region spans residues 253–555 (DHRKLGAELE…LIEHTGGNFP (303 aa)). Positions 351, 402, and 532 each coordinate Zn(2+).

Belongs to the class-II aminoacyl-tRNA synthetase family. As to quaternary structure, homodimer. It depends on Zn(2+) as a cofactor.

It is found in the cytoplasm. The catalysed reaction is tRNA(Thr) + L-threonine + ATP = L-threonyl-tRNA(Thr) + AMP + diphosphate + H(+). Its function is as follows. Catalyzes the attachment of threonine to tRNA(Thr) in a two-step reaction: L-threonine is first activated by ATP to form Thr-AMP and then transferred to the acceptor end of tRNA(Thr). Also edits incorrectly charged L-seryl-tRNA(Thr). The chain is Threonine--tRNA ligase from Prosthecochloris aestuarii (strain DSM 271 / SK 413).